Reading from the N-terminus, the 276-residue chain is uncharacterized protein (276 aa).

The 118-residue stretch at 20-137 (PVLIFIPGAN…PPINTFLPDS (118 aa)) folds into the AB hydrolase-1 domain. The tract at residues 57–76 (GESELTEPLPDSASNPDSDY) is disordered.

It belongs to the AB hydrolase superfamily.

This is an uncharacterized protein from Staphylococcus aureus (strain MW2).